We begin with the raw amino-acid sequence, 466 residues long: 23S rRNA (uracil(1939)-C(5))-methyltransferase RlmD (466 aa).

A TRAM domain is found at 1–54 (MVDVLNIESLDLEARGIAHRDGKVLFVEGALPGERVTVQTVRRKPSYEIAKVEE). [4Fe-4S] cluster-binding residues include Cys67, Cys73, Cys76, and Cys155. Residues Gln264, Phe293, Asn298, Glu314, Asn342, and Asp363 each coordinate S-adenosyl-L-methionine. The active-site Nucleophile is Cys393.

This sequence belongs to the class I-like SAM-binding methyltransferase superfamily. RNA M5U methyltransferase family. RlmD subfamily.

It catalyses the reaction uridine(1939) in 23S rRNA + S-adenosyl-L-methionine = 5-methyluridine(1939) in 23S rRNA + S-adenosyl-L-homocysteine + H(+). Catalyzes the formation of 5-methyl-uridine at position 1939 (m5U1939) in 23S rRNA. The protein is 23S rRNA (uracil(1939)-C(5))-methyltransferase RlmD of Bordetella parapertussis (strain 12822 / ATCC BAA-587 / NCTC 13253).